Consider the following 144-residue polypeptide: Transcriptional regulator MraZ (144 aa).

SpoVT-AbrB domains lie at 5-47 (TYTP…PRAE) and 77-120 (TDEQ…DAQA).

Belongs to the MraZ family. As to quaternary structure, forms oligomers.

The protein localises to the cytoplasm. Its subcellular location is the nucleoid. The protein is Transcriptional regulator MraZ of Mycolicibacterium gilvum (strain PYR-GCK) (Mycobacterium gilvum (strain PYR-GCK)).